Reading from the N-terminus, the 94-residue chain is Integration host factor subunit beta (94 aa).

It belongs to the bacterial histone-like protein family. In terms of assembly, heterodimer of an alpha and a beta chain.

In terms of biological role, this protein is one of the two subunits of integration host factor, a specific DNA-binding protein that functions in genetic recombination as well as in transcriptional and translational control. The protein is Integration host factor subunit beta of Haemophilus influenzae (strain PittGG).